The sequence spans 36 residues: Photosystem II reaction center protein M (36 aa).

Residues 5-25 (ILAFIATALFILVPTAFLLII) form a helical membrane-spanning segment.

The protein belongs to the PsbM family. In terms of assembly, PSII is composed of 1 copy each of membrane proteins PsbA, PsbB, PsbC, PsbD, PsbE, PsbF, PsbH, PsbI, PsbJ, PsbK, PsbL, PsbM, PsbT, PsbX, PsbY, PsbZ, Psb30/Ycf12, at least 3 peripheral proteins of the oxygen-evolving complex and a large number of cofactors. It forms dimeric complexes.

It is found in the plastid. It localises to the chloroplast thylakoid membrane. Its function is as follows. One of the components of the core complex of photosystem II (PSII). PSII is a light-driven water:plastoquinone oxidoreductase that uses light energy to abstract electrons from H(2)O, generating O(2) and a proton gradient subsequently used for ATP formation. It consists of a core antenna complex that captures photons, and an electron transfer chain that converts photonic excitation into a charge separation. This subunit is found at the monomer-monomer interface. The chain is Photosystem II reaction center protein M from Panax ginseng (Korean ginseng).